The primary structure comprises 204 residues: Large ribosomal subunit protein uL4 (204 aa).

Residues 49–72 (QKNRAAVSGGGKKPWRQKGTGRAR) are disordered.

This sequence belongs to the universal ribosomal protein uL4 family. Part of the 50S ribosomal subunit.

Functionally, one of the primary rRNA binding proteins, this protein initially binds near the 5'-end of the 23S rRNA. It is important during the early stages of 50S assembly. It makes multiple contacts with different domains of the 23S rRNA in the assembled 50S subunit and ribosome. In terms of biological role, forms part of the polypeptide exit tunnel. This Saccharophagus degradans (strain 2-40 / ATCC 43961 / DSM 17024) protein is Large ribosomal subunit protein uL4.